Reading from the N-terminus, the 193-residue chain is Thymidine kinase (193 aa).

Residues 9-16 and 87-90 contribute to the ATP site; these read SAMNAGKS and DEAQ. E88 functions as the Proton acceptor in the catalytic mechanism. Zn(2+)-binding residues include C145, C147, C182, and H185.

Belongs to the thymidine kinase family. Homotetramer.

It localises to the cytoplasm. The enzyme catalyses thymidine + ATP = dTMP + ADP + H(+). The sequence is that of Thymidine kinase from Idiomarina loihiensis (strain ATCC BAA-735 / DSM 15497 / L2-TR).